Consider the following 195-residue polypeptide: Apoptosis-associated speck-like protein containing a CARD (195 aa).

One can recognise a Pyrin domain in the interval 1-91 (MGRARDAILD…AGQLQAATHQ (91 aa)). Glycyl lysine isopeptide (Lys-Gly) (interchain with G-Cter in ubiquitin) cross-links involve residues Lys-55 and Lys-174. Residues 107–195 (AAKPGLHFID…SYLVEDLERS (89 aa)) form the CARD domain. Ser-195 bears the Phosphoserine mark.

Self-associates; enforced oligomerization induces apoptosis, NF-kappa-B regulation and interleukin-1 beta secretion. Homooligomers can form disk-like particles of approximately 12 nm diameter and approximately 1 nm height. Next to isoform 1, also isoform 2 and isoform 3 may be involved in oligomerization leading to functional regulation. Component of several inflammasomes containing one pattern recognition receptor/sensor, such as NLRP1, NLRP2, NLRP3, NLRP6, NLRC4, AIM2, MEFV or NOD2, and probably NLRC4, NLRP12 or IFI16. Major component of the ASC pyroptosome, a 1-2 um supramolecular assembly (one per macrophage cell) which consists of oligomerized PYCARD dimers and CASP1. Interacts with CASP1 (precursor form); the interaction induces activation of CASP1 leading to the processing of interleukin-1 beta; PYCARD competes with RIPK2 for binding to CASP1. Interacts with NLRP3; the interaction requires the homooligomerization of NLRP3. Interacts with NLRP2, NLRC4, MEFV, CARD16, AIM2, IFI16, NOD2, RIGI, RIPK2, PYDC1, PYDC2, NLRP10, CASP8, CHUK, IKBKB and BAX. Component of the AIM2 PANoptosome complex, a multiprotein complex that drives inflammatory cell death (PANoptosis). In terms of processing, phosphorylated. Post-translationally, 'Lys-63'-linked polyubiquitination by TRAF3 is critical for speck formation and inflammasome activation. 'Lys-63'-linked deubiquitinated by USP50; a crucial step for NLRP3-mediated inflammasome activation. 'Lys-63'-linked polyubiquitination by PELI1 is also critical for speck formation and inflammasome activation. Deubiquitinated by USP3 that cleaves 'Lys-48'-linked ubiquitin chains and strengthens its stability by blocking proteasomal degradation. In terms of tissue distribution, widely expressed at low levels. Detected in peripheral blood leukocytes, lung, small intestine, spleen, thymus, colon and at lower levels in placenta, liver and kidney. Very low expression in skeletal muscle, heart and brain. Expressed in lung epithelial cells (at protein level). Detected in the leukemia cell lines HL-60 and U-937, but not in Jurkat T-cell lymphoma and Daudi Burkitt's lymphoma. Detected in the melanoma cell line WM35, but not in WM793. Not detected in HeLa cervical carcinoma cells and MOLT-4 lymphocytic leukemia cells.

Its subcellular location is the cytoplasm. It localises to the inflammasome. It is found in the endoplasmic reticulum. The protein resides in the mitochondrion. The protein localises to the nucleus. Its subcellular location is the golgi apparatus membrane. Its function is as follows. Functions as a key mediator in apoptosis and inflammation. Promotes caspase-mediated apoptosis involving predominantly caspase-8 and also caspase-9 in a probable cell type-specific manner. Involved in activation of the mitochondrial apoptotic pathway, promotes caspase-8-dependent proteolytic maturation of BID independently of FADD in certain cell types and also mediates mitochondrial translocation of BAX and activates BAX-dependent apoptosis coupled to activation of caspase-9, -2 and -3. Involved in innate immune response by acting as an integral adapter in the assembly of various inflammasomes (NLRP1, NLRP2, NLRP3, NLRP6, AIM2 and probably IFI16) which recruit and activate caspase-1 leading to processing and secretion of pro-inflammatory cytokines. Caspase-1-dependent inflammation leads to macrophage pyroptosis, a form of cell death. The function as activating adapter in different types of inflammasomes is mediated by the pyrin and CARD domains and their homotypic interactions. Clustered PYCARD nucleates the formation of caspase-1 filaments through the interaction of their respective CARD domains, acting as a platform for of caspase-1 polymerization. In the NLRP1 and NLRC4 inflammasomes seems not be required but facilitates the processing of procaspase-1. In cooperation with NOD2 involved in an inflammasome activated by bacterial muramyl dipeptide leading to caspase-1 activation. May be involved in RIGI-triggered pro-inflammatory responses and inflammasome activation. In collaboration with AIM2 which detects cytosolic double-stranded DNA may also be involved in a caspase-1-independent cell death that involves caspase-8. In adaptive immunity may be involved in maturation of dendritic cells to stimulate T-cell immunity and in cytoskeletal rearrangements coupled to chemotaxis and antigen uptake may be involved in post-transcriptional regulation of the guanine nucleotide exchange factor DOCK2; the latter function is proposed to involve the nuclear form. Also involved in transcriptional activation of cytokines and chemokines independent of the inflammasome; this function may involve AP-1, NF-kappa-B, MAPK and caspase-8 signaling pathways. For regulation of NF-kappa-B activating and inhibiting functions have been reported. Modulates NF-kappa-B induction at the level of the IKK complex by inhibiting kinase activity of CHUK and IKBK. Proposed to compete with RIPK2 for association with CASP1 thereby down-regulating CASP1-mediated RIPK2-dependent NF-kappa-B activation and activating interleukin-1 beta processing. Modulates host resistance to DNA virus infection, probably by inducing the cleavage of and inactivating CGAS in presence of cytoplasmic double-stranded DNA. May have a regulating effect on the function as inflammasome adapter. In terms of biological role, seems to inhibit inflammasome-mediated maturation of interleukin-1 beta. This chain is Apoptosis-associated speck-like protein containing a CARD, found in Homo sapiens (Human).